The following is a 715-amino-acid chain: SANT and BTB domain regulator of class switch recombination (715 aa).

An SANT domain is found at 21–59 (DMILCSLVGVPQPISWDSVARLVPGYTPKECAKRFEELK). A BTB domain is found at 146–254 (MVIHVCDEAK…ECIRYCHKNM (109 aa)). Residues 552–573 (SEEEDYTTGSEVTEDEVGDEEE) are compositionally biased toward acidic residues. Disordered regions lie at residues 552 to 623 (SEEE…VSLQ) and 689 to 715 (SAHS…GRPT). Residues 578 to 605 (QAGRKVKPKRSAKQTKKHISSPSIHKKE) show a composition bias toward basic residues. Polar residues-rich tracts occupy residues 614 to 623 (DSSPFTVSLQ) and 690 to 699 (AHSNTRQMNT).

It belongs to the KIAA1841 family. Homodimer.

In terms of biological role, negatively regulates class switch recombination or isotype switching in splenic B-cells. This chain is SANT and BTB domain regulator of class switch recombination, found in Xenopus laevis (African clawed frog).